Reading from the N-terminus, the 334-residue chain is MTKPIVFSGAQPSGELTIGNYMGALRQWVNMQDDYHCIYCIVDQHAITVRQDAQKLRKATLDTLALYLACGIDPEKSTIFVQSHVPEHAQLGWALNCYTYFGELSRMTQFKDKSARYAENINAGLFDYPVLMAADILLYQTNLVPVGEDQKQHLELSRDIAQRFNALYGEIFKVPEPFIPKSGARVMSLLEPTKKMSKSDDNRNNVIGLLEDPKSVVKKIKRAVTDSDEPPVVRYDVQNKAGVSNLLDILSAVTGQSIPELEKQFEGKMYGHLKGEVADAVSGMLTELQERYHRFRNDEAFLQQVMKDGAEKASAHASRTLKAVYEAIGFVAKP.

Residues 11 to 13 (QPS) and 19 to 20 (GN) contribute to the ATP site. The 'HIGH' region signature appears at 12–20 (PSGELTIGN). Position 135 (Asp135) interacts with L-tryptophan. ATP-binding positions include 147–149 (GED), Val186, and 195–199 (KMSKS). The short motif at 195–199 (KMSKS) is the 'KMSKS' region element.

This sequence belongs to the class-I aminoacyl-tRNA synthetase family. As to quaternary structure, homodimer.

It is found in the cytoplasm. It carries out the reaction tRNA(Trp) + L-tryptophan + ATP = L-tryptophyl-tRNA(Trp) + AMP + diphosphate + H(+). In terms of biological role, catalyzes the attachment of tryptophan to tRNA(Trp). Amino acylates tRNA(Trp) with both L- and D-tryptophan, although D-tryptophan is a poor substrate. This chain is Tryptophan--tRNA ligase, found in Escherichia coli (strain K12).